The primary structure comprises 627 residues: Plastin-3 (627 aa).

EF-hand domains are found at residues 8–43 and 48–83; these read EELEELREAFGKVDLNGNGFICDHELHDLFKEANLP and KVREIIQKLMEEGDKNKDNMISFDEFVSIFQELKSG. Ca(2+) is bound by residues aspartate 21, asparagine 23, asparagine 25, glutamate 32, aspartate 61, asparagine 63, aspartate 65, methionine 67, and glutamate 72. Actin-binding stretches follow at residues 105–378 and 379–624; these read TSEL…ALTK and PENQ…GRGM. 4 consecutive Calponin-homology (CH) domains span residues 119–235, 263–374, 393–503, and 515–624; these read EEER…KIGL, LSPE…NKYP, TREE…RRYT, and KVND…GRGM.

It localises to the cytoplasm. Its function is as follows. Actin-bundling protein. The sequence is that of Plastin-3 (pls3) from Danio rerio (Zebrafish).